Reading from the N-terminus, the 343-residue chain is UDP-3-O-(3-hydroxymyristoyl)glucosamine N-acyltransferase (343 aa).

His239 (proton acceptor) is an active-site residue.

The protein belongs to the transferase hexapeptide repeat family. LpxD subfamily. As to quaternary structure, homotrimer.

It catalyses the reaction a UDP-3-O-[(3R)-3-hydroxyacyl]-alpha-D-glucosamine + a (3R)-hydroxyacyl-[ACP] = a UDP-2-N,3-O-bis[(3R)-3-hydroxyacyl]-alpha-D-glucosamine + holo-[ACP] + H(+). It carries out the reaction UDP-3-O-[(3R)-3-hydroxytetradecanoyl]-alpha-D-glucosamine + (3R)-hydroxytetradecanoyl-[ACP] = UDP-2-N,3-O-bis[(3R)-3-hydroxytetradecanoyl]-alpha-D-glucosamine + holo-[ACP] + H(+). It participates in glycolipid biosynthesis; lipid IV(A) biosynthesis; lipid IV(A) from (3R)-3-hydroxytetradecanoyl-[acyl-carrier-protein] and UDP-N-acetyl-alpha-D-glucosamine: step 3/6. In terms of biological role, catalyzes the N-acylation of UDP-3-O-(hydroxytetradecanoyl)glucosamine using 3-hydroxytetradecanoyl-ACP as the acyl donor. Is involved in the biosynthesis of lipid A, a phosphorylated glycolipid that anchors the lipopolysaccharide to the outer membrane of the cell. This Blochmanniella pennsylvanica (strain BPEN) protein is UDP-3-O-(3-hydroxymyristoyl)glucosamine N-acyltransferase.